Here is a 21-residue protein sequence, read N- to C-terminus: Nigrocin-2GRb (21 aa).

As to expression, expressed by the skin glands.

It localises to the secreted. Functionally, antimicrobial peptide active against the Gram-positive bacterium S.aureus (MIC=12.5 uM) and against the Gram-negative bacteria E.coli (MIC=3 uM). Has antifungal activity against C.albicans (MIC=50 uM). Has some hemolytic activity against human erythrocytes (LC(50)=40 uM). The chain is Nigrocin-2GRb from Odorrana grahami (Yunnanfu frog).